A 339-amino-acid chain; its full sequence is Holliday junction branch migration complex subunit RuvB (339 aa).

Residues 1–22 (MIDADPTLRPEPLPEDNDRALR) are disordered. The large ATPase domain (RuvB-L) stretch occupies residues 1–182 (MIDADPTLRP…FGIPTRLQFY (182 aa)). ATP contacts are provided by residues leucine 21, arginine 22, glycine 63, lysine 66, threonine 67, threonine 68, 129-131 (EDF), arginine 172, tyrosine 182, and arginine 219. Residue threonine 67 participates in Mg(2+) binding. A small ATPAse domain (RuvB-S) region spans residues 183-253 (TIDELFEIVS…LADGALTRLG (71 aa)). The interval 256 to 339 (QLGLDGADRR…PPKSQSDLFG (84 aa)) is head domain (RuvB-H). DNA contacts are provided by arginine 292, arginine 311, and arginine 316.

This sequence belongs to the RuvB family. Homohexamer. Forms an RuvA(8)-RuvB(12)-Holliday junction (HJ) complex. HJ DNA is sandwiched between 2 RuvA tetramers; dsDNA enters through RuvA and exits via RuvB. An RuvB hexamer assembles on each DNA strand where it exits the tetramer. Each RuvB hexamer is contacted by two RuvA subunits (via domain III) on 2 adjacent RuvB subunits; this complex drives branch migration. In the full resolvosome a probable DNA-RuvA(4)-RuvB(12)-RuvC(2) complex forms which resolves the HJ.

The protein resides in the cytoplasm. It carries out the reaction ATP + H2O = ADP + phosphate + H(+). In terms of biological role, the RuvA-RuvB-RuvC complex processes Holliday junction (HJ) DNA during genetic recombination and DNA repair, while the RuvA-RuvB complex plays an important role in the rescue of blocked DNA replication forks via replication fork reversal (RFR). RuvA specifically binds to HJ cruciform DNA, conferring on it an open structure. The RuvB hexamer acts as an ATP-dependent pump, pulling dsDNA into and through the RuvAB complex. RuvB forms 2 homohexamers on either side of HJ DNA bound by 1 or 2 RuvA tetramers; 4 subunits per hexamer contact DNA at a time. Coordinated motions by a converter formed by DNA-disengaged RuvB subunits stimulates ATP hydrolysis and nucleotide exchange. Immobilization of the converter enables RuvB to convert the ATP-contained energy into a lever motion, pulling 2 nucleotides of DNA out of the RuvA tetramer per ATP hydrolyzed, thus driving DNA branch migration. The RuvB motors rotate together with the DNA substrate, which together with the progressing nucleotide cycle form the mechanistic basis for DNA recombination by continuous HJ branch migration. Branch migration allows RuvC to scan DNA until it finds its consensus sequence, where it cleaves and resolves cruciform DNA. This is Holliday junction branch migration complex subunit RuvB from Ruegeria sp. (strain TM1040) (Silicibacter sp.).